A 224-amino-acid chain; its full sequence is Protein FMP52, mitochondrial (224 aa).

It belongs to the FMP52 family.

The protein localises to the mitochondrion outer membrane. The sequence is that of Protein FMP52, mitochondrial (FMP52) from Kluyveromyces lactis (strain ATCC 8585 / CBS 2359 / DSM 70799 / NBRC 1267 / NRRL Y-1140 / WM37) (Yeast).